Here is a 104-residue protein sequence, read N- to C-terminus: NADH-quinone oxidoreductase subunit K (104 aa).

The next 3 membrane-spanning stretches (helical) occupy residues 7 to 27 (PDMAMLLAAGLFALGLLGVLV), 31 to 51 (LLFMLMSIEIMLNAAALAFVA), and 63 to 83 (VMFLMILSLAAAEAAIGLAIL).

It belongs to the complex I subunit 4L family. NDH-1 is composed of 14 different subunits. Subunits NuoA, H, J, K, L, M, N constitute the membrane sector of the complex.

It is found in the cell inner membrane. It catalyses the reaction a quinone + NADH + 5 H(+)(in) = a quinol + NAD(+) + 4 H(+)(out). In terms of biological role, NDH-1 shuttles electrons from NADH, via FMN and iron-sulfur (Fe-S) centers, to quinones in the respiratory chain. The immediate electron acceptor for the enzyme in this species is believed to be ubiquinone. Couples the redox reaction to proton translocation (for every two electrons transferred, four hydrogen ions are translocated across the cytoplasmic membrane), and thus conserves the redox energy in a proton gradient. The polypeptide is NADH-quinone oxidoreductase subunit K (Gluconacetobacter diazotrophicus (strain ATCC 49037 / DSM 5601 / CCUG 37298 / CIP 103539 / LMG 7603 / PAl5)).